The following is a 329-amino-acid chain: 36 kDa antigen (329 aa).

Residues 11–31 traverse the membrane as a helical segment; sequence AILTGGGALLLGLIVLFYLAY.

The protein belongs to the membrane fusion protein (MFP) (TC 8.A.1) family.

The protein localises to the membrane. The sequence is that of 36 kDa antigen from Helicobacter pylori (strain ATCC 700392 / 26695) (Campylobacter pylori).